We begin with the raw amino-acid sequence, 587 residues long: uncharacterized protein (587 aa).

Positions 1 to 21 (MANRLLIYGLILWVSIIGSFA) are cleaved as a signal peptide. Topologically, residues 22–541 (LDRNKTAQNA…LEKEVSFQRR (520 aa)) are lumenal. Asn-25 carries an N-linked (GlcNAc...) asparagine glycan. Residues 44–108 (GSTTNVQKEH…RNPGDSSNSF (65 aa)) form a disordered region. Over residues 63–90 (RTHDFRQASKVDIRQADIRENGERKEQD) the composition is skewed to basic and acidic residues. Residues 91-108 (ALTQPATPRNPGDSSNSF) show a composition bias toward polar residues. Residues 163–331 (NEWSEREENQ…SLIKVYGKSM (169 aa)) form the SUN domain. 5 N-linked (GlcNAc...) asparagine glycosylation sites follow: Asn-378, Asn-381, Asn-408, Asn-448, and Asn-486. A helical membrane pass occupies residues 542–562 (IVYASFFAFVGLISYLLITRE). Topologically, residues 563–587 (LYFEDFEESKNGAIEKADIVQQAIR) are cytoplasmic.

It belongs to the SLP1 family. In terms of assembly, interacts with EMP65.

The protein localises to the endoplasmic reticulum membrane. Its function is as follows. May be involved in membrane protein folding. Required for localization of MPS3 to the nuclear envelope. This is an uncharacterized protein from Saccharomyces cerevisiae (strain ATCC 204508 / S288c) (Baker's yeast).